Here is a 330-residue protein sequence, read N- to C-terminus: Probable cytosolic iron-sulfur protein assembly protein 1 (330 aa).

WD repeat units lie at residues 12–49 (LYKEKIWSFDFSQGILATGSTDRKIKLVSVKDDDFTLI), 56–95 (AHKKAIRSVAWRPHTSLLAAGSFDSTVSIWAKEESADRTF), 105–144 (GHENEVKGVAWSNDGYYLATCSRDKSVWIWETDESGEEYE), 151–190 (EHSQDVKHVIWHPSEALLASSSYDDTVRIWKDYDDDWECV), 195–236 (GHEG…EDDQ), 248–286 (VHKRQVYNVAWGFNGLIASVGADGVLAVYEEVDGEWKVF), and 292–330 (CHGVYEINVVKWLELNGKTILATGGDDGIVNFWSLEKAA).

The protein belongs to the WD repeat CIA1 family. In terms of assembly, interacts with NAR1.

It localises to the cytoplasm. Its subcellular location is the nucleus. Its function is as follows. Essential component of the cytosolic iron-sulfur (Fe/S) protein assembly machinery. Required for the maturation of extramitochondrial Fe/S proteins. The polypeptide is Probable cytosolic iron-sulfur protein assembly protein 1 (Saccharomyces cerevisiae (strain YJM789) (Baker's yeast)).